The sequence spans 391 residues: Phosphoglycerate kinase (391 aa).

Substrate is bound by residues 21–23 (DLN), Arg-36, 59–62 (HLGR), Arg-114, and Arg-147. ATP is bound by residues Lys-198, Glu-315, and 344–347 (GGDT).

It belongs to the phosphoglycerate kinase family. In terms of assembly, monomer.

The protein localises to the cytoplasm. The enzyme catalyses (2R)-3-phosphoglycerate + ATP = (2R)-3-phospho-glyceroyl phosphate + ADP. Its pathway is carbohydrate degradation; glycolysis; pyruvate from D-glyceraldehyde 3-phosphate: step 2/5. In Actinobacillus pleuropneumoniae serotype 5b (strain L20), this protein is Phosphoglycerate kinase.